The sequence spans 236 residues: Rho-related GTP-binding protein RhoV (236 aa).

The interval 1–27 (MPPRELSEAESSPLRSPTPPPGRGSAS) is disordered. Ser25 carries the phosphoserine modification. Residues 38–45 (GDGAVGKS), 85–89 (DTAGQ), and 143–146 (TQAD) each bind GTP. Cys234 carries S-palmitoyl cysteine lipidation.

This sequence belongs to the small GTPase superfamily. Rho family. In terms of assembly, interacts with PAK2. It depends on Mg(2+) as a cofactor.

It localises to the cell membrane. Its subcellular location is the endosome membrane. Plays a role in the control of the actin cytoskeleton via activation of the JNK pathway. The chain is Rho-related GTP-binding protein RhoV from Bos taurus (Bovine).